The sequence spans 342 residues: S-adenosyl-L-methionine-dependent tRNA 4-demethylwyosine synthase (342 aa).

The [4Fe-4S] cluster site is built by Cys45, Cys58, Cys71, Cys81, Cys85, and Cys88. Residues 64–312 (YGIHSHRCLQ…VKHLPGYHIE (249 aa)) form the Radical SAM core domain.

This sequence belongs to the TYW1 family. In terms of assembly, monomer. [4Fe-4S] cluster serves as cofactor.

Its subcellular location is the cytoplasm. The catalysed reaction is N(1)-methylguanosine(37) in tRNA(Phe) + pyruvate + S-adenosyl-L-methionine = 4-demethylwyosine(37) in tRNA(Phe) + 5'-deoxyadenosine + L-methionine + CO2 + H2O. Functionally, component of the wyosine derivatives biosynthesis pathway that catalyzes the condensation of N-methylguanine with 2 carbon atoms from pyruvate to form the tricyclic 4-demethylwyosine (imG-14) on guanosine-37 of tRNA(Phe). The protein is S-adenosyl-L-methionine-dependent tRNA 4-demethylwyosine synthase of Pyrococcus abyssi (strain GE5 / Orsay).